A 653-amino-acid polypeptide reads, in one-letter code: Threonine--tRNA ligase (653 aa).

Residues 1–61 (MIKITFPDGN…NEDAEVKLFK (61 aa)) form the TGS domain. The interval 243 to 542 (DHRKIGKELE…LIEHTAGKFP (300 aa)) is catalytic. Zn(2+) contacts are provided by C338, H389, and H519.

The protein belongs to the class-II aminoacyl-tRNA synthetase family. In terms of assembly, homodimer. Zn(2+) is required as a cofactor.

It localises to the cytoplasm. It carries out the reaction tRNA(Thr) + L-threonine + ATP = L-threonyl-tRNA(Thr) + AMP + diphosphate + H(+). Catalyzes the attachment of threonine to tRNA(Thr) in a two-step reaction: L-threonine is first activated by ATP to form Thr-AMP and then transferred to the acceptor end of tRNA(Thr). Also edits incorrectly charged L-seryl-tRNA(Thr). In Porphyromonas gingivalis (strain ATCC 33277 / DSM 20709 / CIP 103683 / JCM 12257 / NCTC 11834 / 2561), this protein is Threonine--tRNA ligase.